A 435-amino-acid chain; its full sequence is Transcription factor tau 55 kDa subunit (435 aa).

A disordered region spans residues 362–417; sequence GLLSPTEENETTNAGQSKGSSTANDPNIQIQEEDVGLPDSTNTSRDHTGDKEEVQS. The residue at position 365 (S365) is a Phosphoserine. Polar residues predominate over residues 372–391; sequence TTNAGQSKGSSTANDPNIQI. Residues 405 to 417 show a composition bias toward basic and acidic residues; the sequence is SRDHTGDKEEVQS.

Component of the TFIIIC complex composed of TFC1, TFC3, TFC4, TFC6, TFC7 and TFC8. The subunits are organized in two globular domains, tauA and tauB, connected by a proteolysis-sensitive and flexible linker.

The protein resides in the nucleus. In terms of biological role, TFIIIC mediates tRNA and 5S RNA gene activation by binding to intragenic promoter elements. Upstream of the transcription start site, TFIIIC assembles the initiation complex TFIIIB-TFIIIC-tDNA, which is sufficient for RNA polymerase III recruitment and function. Part of the tauA domain of TFIIIC that binds boxA DNA promoter sites of tRNA and similar genes. The sequence is that of Transcription factor tau 55 kDa subunit (TFC7) from Saccharomyces cerevisiae (strain ATCC 204508 / S288c) (Baker's yeast).